The sequence spans 651 residues: Intraflagellar transport protein 70A (651 aa).

TPR repeat units follow at residues 8–41 (DGEYTATIYKLIKEARYGEAIQILSNELQKQYRS), 42–75 (RAGLSLLGYCYYQIQDFVNAADCYEQLIQITPEV), 140–173 (PESEINMGCLLYKEGHYEEACKKFITAMQVMGYK), 175–207 (DLSYNIALCYYSMKQYAPALKHIADIIERGIRE), 372–405 (LTEQMRKLTKQVQEARHNRDDEAVKKAVNEYDET), 410–443 (IPVLMAQAKIYWNMENYQMVEKIFRKSVEFCNEH), and 445–478 (IWKLNVAHVLFMQDNKYKEAIGFYEPIVKKHYDN). The stretch at 494-521 (YIMTSQNEEAEELMRKIEKEEEQIAYEN) forms a coiled coil. The TPR 8 repeat unit spans residues 530 to 563 (CIVNLVIGTLYCAKGNYEFGISRVIKSLEPYNKK).

This sequence belongs to the TTC30/dfy-1/fleer family.

It is found in the cell projection. It localises to the cilium. In terms of biological role, required for polyglutamylation of axonemal tubulin. Plays a role in anterograde intraflagellar transport (IFT), the process by which cilia precursors are transported from the base of the cilium to the site of their incorporation at the tip. The polypeptide is Intraflagellar transport protein 70A (ift70a) (Xenopus tropicalis (Western clawed frog)).